The chain runs to 79 residues: uncharacterized protein (79 aa).

Residues Met1–Cys24 form the signal peptide. N-linked (GlcNAc...) asparagine glycosylation occurs at Asn33.

The protein localises to the secreted. This is an uncharacterized protein from Saccharomyces cerevisiae (strain ATCC 204508 / S288c) (Baker's yeast).